We begin with the raw amino-acid sequence, 536 residues long: Multicopper oxidase terE (536 aa).

The segment at 1 to 21 is disordered; sequence MHWHGLSQSTAPFSDGSPQAS. Plastocyanin-like domains follow at residues 1–67, 79–238, and 354–488; these read MHWH…VEEK, ERIL…LSYN, and TVQK…VWMM. Residues histidine 2, histidine 4, histidine 48, and histidine 50 each coordinate Cu cation. Histidine 397 serves as a coordination point for Cu cation.

This sequence belongs to the multicopper oxidase family.

Its pathway is secondary metabolite biosynthesis. Multicopper oxidase; part of the gene cluster that mediates the biosynthesis of terrein, a fungal metabolite with ecological, antimicrobial, antiproliferative, and antioxidative activities. The first step in the pathway is performed by the polyketide synthase terA that produces 4-hydroxy-6-methylpyranon (4-HMP), orsellinic acid (OA), and 2,3-dehydro-6-hydroxymellein (2,3-dehydro-6-HM) by condensing acetyl-CoA with two, three, or four malonyl-CoA units, respectively. 4-HMP and OA are not pathway intermediates, but are rather shunt or side products. 2,3-dehydro-6-HM is further converted to 6-hydroxymellein (6-HM) by the 6-hydroxymellein synthase terB. The monooxygenases terC and terD, the multicopper oxidase terE and the Kelch-like protein terF are then involved in the transformation of 6-HM to terrein. Even if they are co-regulated with the other terrein cluster genes, terH and terI seem to be dispensable for terrein production; whereas one or both of the 2 transporters terG and terJ are probably required for efficient secretion of metabolites. In Aspergillus terreus (strain NIH 2624 / FGSC A1156), this protein is Multicopper oxidase terE.